The chain runs to 311 residues: Ribonuclease Z (311 aa).

Zn(2+) is bound by residues His61, His63, Asp65, His66, His139, Asp210, and His268. Asp65 acts as the Proton acceptor in catalysis.

It belongs to the RNase Z family. Homodimer. It depends on Zn(2+) as a cofactor.

The enzyme catalyses Endonucleolytic cleavage of RNA, removing extra 3' nucleotides from tRNA precursor, generating 3' termini of tRNAs. A 3'-hydroxy group is left at the tRNA terminus and a 5'-phosphoryl group is left at the trailer molecule.. Its function is as follows. Zinc phosphodiesterase, which displays some tRNA 3'-processing endonuclease activity. Probably involved in tRNA maturation, by removing a 3'-trailer from precursor tRNA. This Haloarcula marismortui (strain ATCC 43049 / DSM 3752 / JCM 8966 / VKM B-1809) (Halobacterium marismortui) protein is Ribonuclease Z.